The primary structure comprises 533 residues: Calcium-dependent protein kinase 19 (533 aa).

Polar residues-rich tracts occupy residues 1–12 (MGSCCSRATSPD) and 24–38 (SHQTKPAQTTPSYNH). Residues 1-53 (MGSCCSRATSPDSGRGGANGYGYSHQTKPAQTTPSYNHPQPPPPAEVRYTPSA) form a disordered region. Glycine 2 is lipidated: N-myristoyl glycine. Positions 85 to 343 (YSLGKELGRG…SAQVLQHPWL (259 aa)) constitute a Protein kinase domain. Residues 91 to 99 (LGRGQFGVT) and lysine 114 contribute to the ATP site. The active-site Proton acceptor is the aspartate 209. The interval 348-378 (ASDKPIDSAVLSRMKQFRAMNKLKKMALKVI) is autoinhibitory domain. EF-hand domains are found at residues 385–420 (EEIKGLKQMFTNMDTDNSGTITYEELKAGLAKLGSK), 421–456 (LSEAEVKQLMEAADVDGNGSIDYVEFITATMHRHKL), 457–492 (ERDEHLFKAFQYFDKDNSGFITRDELESALIEHEMG), and 497–527 (IKDIISEVDTDNDGRINYEEFCAMMRGGGMQ). Positions 398, 400, 402, 404, 409, 434, 436, 438, 440, 445, 470, 472, 474, 481, 505, 507, 509, 511, and 516 each coordinate Ca(2+).

It belongs to the protein kinase superfamily. Ser/Thr protein kinase family. CDPK subfamily. Expressed in root tips, leaf veins, mesophyll cells, flower reproductive organs and mature pollen grains.

It is found in the membrane. The catalysed reaction is L-seryl-[protein] + ATP = O-phospho-L-seryl-[protein] + ADP + H(+). It carries out the reaction L-threonyl-[protein] + ATP = O-phospho-L-threonyl-[protein] + ADP + H(+). Its activity is regulated as follows. Activated by calcium. Autophosphorylation may play an important role in the regulation of the kinase activity. May play a role in signal transduction pathways that involve calcium as a second messenger. This Oryza sativa subsp. japonica (Rice) protein is Calcium-dependent protein kinase 19.